The sequence spans 287 residues: Formamidopyrimidine-DNA glycosylase (287 aa).

Proline 2 serves as the catalytic Schiff-base intermediate with DNA. The active-site Proton donor is the glutamate 3. Lysine 58 serves as the catalytic Proton donor; for beta-elimination activity. Positions 104, 123, and 166 each coordinate DNA. An FPG-type zinc finger spans residues 251 to 287 (RVYDREGEPCPTPACKGVIAREVQAGRSTFFCPVCQV). Arginine 277 serves as the catalytic Proton donor; for delta-elimination activity.

It belongs to the FPG family. As to quaternary structure, monomer. The cofactor is Zn(2+).

The catalysed reaction is Hydrolysis of DNA containing ring-opened 7-methylguanine residues, releasing 2,6-diamino-4-hydroxy-5-(N-methyl)formamidopyrimidine.. It catalyses the reaction 2'-deoxyribonucleotide-(2'-deoxyribose 5'-phosphate)-2'-deoxyribonucleotide-DNA = a 3'-end 2'-deoxyribonucleotide-(2,3-dehydro-2,3-deoxyribose 5'-phosphate)-DNA + a 5'-end 5'-phospho-2'-deoxyribonucleoside-DNA + H(+). Involved in base excision repair of DNA damaged by oxidation or by mutagenic agents. Acts as a DNA glycosylase that recognizes and removes damaged bases. Has a preference for oxidized purines, such as 7,8-dihydro-8-oxoguanine (8-oxoG). Has AP (apurinic/apyrimidinic) lyase activity and introduces nicks in the DNA strand. Cleaves the DNA backbone by beta-delta elimination to generate a single-strand break at the site of the removed base with both 3'- and 5'-phosphates. This Caulobacter vibrioides (strain ATCC 19089 / CIP 103742 / CB 15) (Caulobacter crescentus) protein is Formamidopyrimidine-DNA glycosylase.